A 1600-amino-acid chain; its full sequence is A disintegrin and metalloproteinase with thrombospondin motifs 12 (1600 aa).

The first 25 residues, 1–25, serve as a signal peptide directing secretion; it reads MPCARGSWLAKLSIVAQLINFGAFC. A propeptide spanning residues 26–244 is cleaved from the precursor; that stretch reads HGRQTQPWPV…TLRSRSLSRR (219 aa). N-linked (GlcNAc...) asparagine glycosylation occurs at asparagine 105. The Cysteine switch motif lies at 210–217; the sequence is PICGLKDS. Cysteine 212 lines the Zn(2+) pocket. One can recognise a Peptidase M12B domain in the interval 250-460; it reads RWVETLVVAD…GRGFCLDDIP (211 aa). 11 disulfide bridges follow: cysteine 326–cysteine 380, cysteine 355–cysteine 362, cysteine 374–cysteine 455, cysteine 413–cysteine 439, cysteine 482–cysteine 505, cysteine 493–cysteine 511, cysteine 500–cysteine 530, cysteine 524–cysteine 535, cysteine 558–cysteine 595, cysteine 562–cysteine 600, and cysteine 573–cysteine 585. Histidine 396 contacts Zn(2+). Glutamate 397 is an active-site residue. Zn(2+) contacts are provided by histidine 400 and histidine 406. The region spanning 469–548 is the Disintegrin domain; that stretch reads VIAPGVIYDV…GKKPESIPGG (80 aa). 4 TSP type-1 domains span residues 546 to 601, 827 to 887, 891 to 947, and 948 to 1001; these read PGGW…HPCR, KLLY…KDCP, WAGE…RDIL, and CPSD…QQCP. Residues 705–831 form a spacer 1 region; that stretch reads CQTVKKLFRQ…DNDVEKLLYF (127 aa). The spacer 2 stretch occupies residues 1001–1321; the sequence is PFSRRVLKPN…HLMKDHSPAY (321 aa). 2 disordered regions span residues 1006-1140 and 1158-1179; these read VLKP…LSSS and PEVEIHSGSGEDSDQPLNKDKS. The segment covering 1038-1047 has biased composition (low complexity); it reads PTPLSTPTVP. Residues 1048–1107 show a composition bias toward polar residues; the sequence is ESMSTSTPTINSLGSTIASQEDANGMGWQNNSTQAEEGSHFPTSSGSTSQVPVTSWSLSI. Residues 1130–1140 show a composition bias toward low complexity; it reads TTTSDSGLSSS. TSP type-1 domains are found at residues 1318 to 1371, 1373 to 1428, 1429 to 1477, and 1478 to 1538; these read SPAY…RPCA, WRVG…CNLE, PCGE…NRHL, and CCHW…QACR. The PLAC domain maps to 1541–1581; it reads ADLTCLKDRLSISFCQTLKSMRKCSVPSVRAQCCLSCPQAP.

As to quaternary structure, interacts with COMP. Zn(2+) serves as cofactor. In terms of processing, the precursor is cleaved by a furin endopeptidase. Subjected to an intracellular maturation process yielding a 120 kDa N-terminal fragment containing the metalloproteinase, disintegrin, one TSP type-1 and the Cys-rich domains and a 83 kDa C-terminal fragment containing the spacer 2 and four TSP type-1 domains. Post-translationally, glycosylated. Can be O-fucosylated by POFUT2 on a serine or a threonine residue found within the consensus sequence C1-X(2)-(S/T)-C2-G of the TSP type-1 repeat domains where C1 and C2 are the first and second cysteine residue of the repeat, respectively. Fucosylated repeats can then be further glycosylated by the addition of a beta-1,3-glucose residue by the glucosyltransferase, B3GALTL. Fucosylation mediates the efficient secretion of ADAMTS family members. Can also be C-glycosylated with one or two mannose molecules on tryptophan residues within the consensus sequence W-X-X-W of the TPRs, and N-glycosylated. These other glycosylations can also facilitate secretion.

It localises to the secreted. The protein localises to the extracellular space. It is found in the extracellular matrix. With respect to regulation, inhibited by alpha-2 macroglobulin. Metalloprotease that plays a role in the degradation of COMP. Also cleaves alpha-2 macroglobulin and aggregan. Has anti-tumorigenic properties. This Mus musculus (Mouse) protein is A disintegrin and metalloproteinase with thrombospondin motifs 12 (Adamts12).